The following is a 376-amino-acid chain: WD repeat-containing protein wdr-5.1 (376 aa).

A compositionally biased stretch (polar residues) spans 1 to 24; the sequence is MDTSENAASAAEQQPTQQIDQLTV. The disordered stretch occupies residues 1 to 70; sequence MDTSENAASA…TPNPNAAGAS (70 aa). Positions 25-53 are enriched in low complexity; it reads PNAPDGGSSAPAPSTSPNSISPSNPTGTP. 7 WD repeats span residues 85–115, 127–157, 169–199, 211–241, 254–284, 296–329, and 341–373; these read GHTK…KIWN, GHKL…KIFE, GHNN…RIWD, AHSD…RIWD, DENP…KLWD, GHEN…YIWN, and GHTQ…HIWR.

Belongs to the WD repeat WDR5/wds family. Component of the SET2 complex (also known as the SET1/COMPASS complex), which contains at least set-2, swd-2.1, cfp-1, rbbp-5, wdr-5.1, dpy-30 and ash-2. Within the complex, interacts with cfp-1, ash-2, dpy-30 and hda-1. Interacts with histone H3 both unmethylated and methylated at 'Lys-4'. Interacts with jmjd-3.1, ceh-6, sox-2, sem-4 and egl-27. Interacts with set-2. As to expression, enriched in the germline. Detected in all nuclei of the embryo. In larvae, expression is detected in the nuclei of seam cells, somatic gonad precursor cells Z1 and Z4, vulval precursor cells, distal tip cells, hypodermal cells, intestinal and muscle cells. Also detected in the neurons from the ventral nerve cord, head and tail region. Expressed in the head and tail region, intestinal cells, muscle cells, cells of the vulva, spermatheca and sheath cells in adults.

It localises to the nucleus. In terms of biological role, contributes to histone modification. May position the N-terminus of histone H3 for efficient trimethylation at 'Lys-4'. Required for di- and trimethylation, particularly for the trimethylation at 'Lys-4' of histone H3. Not required for demethylation of histone H3 'Lys-27'. H3 'Lys-4' methylation represents a specific tag for epigenetic transcriptional activation, germline establishment, maintenance and function. Implicated in the epigenetic inheritance of lifespan over several generations. Acts in the germline to limit the longevity of the soma, probably by regulating a lipid metabolism pathway that signals from the germline to the intestine, thereby preventing accumulation of mono-unsaturated fatty acids. Required for RNA interference with probable antagonistic role against hpl-2 function. Plays a role in vulval cell fate specification by acting in the synthetic multivulva pathway independent of set-2. Sex determining protein required in the germline to promote the spermatogenesis to oogenesis switch during the late larval stages of development. Acts with the sex determining factor tra-1, and redundantly with wdr-5.2, to regulate fog-3 expression, which in turn determines germ cell fate. Cooperates with jmjd-3.1, egl-27 and unc-3 to ensure robust transdifferentiation of the Y rectal cell to the PDA motor neuron during larval development. This chain is WD repeat-containing protein wdr-5.1 (wdr-5.1), found in Caenorhabditis elegans.